The chain runs to 375 residues: Secreted LysM effector Vd4LysM (375 aa).

The signal sequence occupies residues 1–24 (MPSVTISSTMLAGLLLMLVPASSA). The LysM 1 domain maps to 57–104 (SWWWDNEGQIPCANMPAEWGITMQDFLRWNPSITSSCGNFLNGRSYCV). Residues 108 to 139 (GEEPPVPGTPTTTTAPATTTKPSNGITTPQPI) form a disordered region. A compositionally biased stretch (low complexity) spans 116 to 129 (TPTTTTAPATTTKP). In terms of domain architecture, LysM 2 spans 149–195 (KFHYISEGDRCQDILSYQKITLADFFKWNPAVKSDCSGLWSKTNACV). Over residues 206–217 (TTTTKPATPTTP) the composition is skewed to low complexity. Residues 206 to 225 (TTTTKPATPTTPSNGITTPQ) form a disordered region. The LysM 3 domain occupies 237 to 283 (KFHYISEGDRCQDILSYQKITQADFFKWNPAVKSDCSGLWSKTHACV). Residues 287-317 (GGQAPPPTPTTTKPTTTKPPGNGVTTPTPTQ) form a disordered region. A compositionally biased stretch (low complexity) spans 296–317 (TTTKPTTTKPPGNGVTTPTPTQ). Residues 326–372 (KFHFVSPGNTCQQIVSYQKITMANFVKWNSGAGSGCNNLWGNTHACV) enclose the LysM 4 domain.

Belongs to the secreted LysM effector family.

Might have a role in sequestration of chitin oligosaccharides (breakdown products of fungal cell walls that are released during invasion and act as triggers of host immunity) to dampen host defense. Does not play an important role during host colonization. The polypeptide is Secreted LysM effector Vd4LysM (Verticillium dahliae (strain VdLs.17 / ATCC MYA-4575 / FGSC 10137) (Verticillium wilt)).